Consider the following 351-residue polypeptide: Photosystem II D2 protein (351 aa).

The helical transmembrane segment at threonine 39–threonine 59 threads the bilayer. Histidine 116 serves as a coordination point for chlorophyll a. Residues glycine 123 to proline 139 traverse the membrane as a helical segment. Pheophytin a contacts are provided by glutamine 128 and asparagine 141. Residues valine 151 to histidine 164 traverse the membrane as a helical segment. Residue histidine 196 participates in chlorophyll a binding. The chain crosses the membrane as a helical span at residues glycine 206–alanine 226. Positions 213 and 260 each coordinate a plastoquinone. Residue histidine 213 coordinates Fe cation. Residue histidine 267 coordinates Fe cation. The helical transmembrane segment at glycine 277–arginine 293 threads the bilayer.

The protein belongs to the reaction center PufL/M/PsbA/D family. In terms of assembly, PSII is composed of 1 copy each of membrane proteins PsbA, PsbB, PsbC, PsbD, PsbE, PsbF, PsbH, PsbI, PsbJ, PsbK, PsbL, PsbM, PsbT, PsbX, PsbY, Psb30/Ycf12, peripheral proteins PsbO, CyanoQ (PsbQ), PsbU, PsbV and a large number of cofactors. It forms dimeric complexes. The D1/D2 heterodimer binds P680, chlorophylls that are the primary electron donor of PSII, and subsequent electron acceptors. It shares a non-heme iron and each subunit binds pheophytin, quinone, additional chlorophylls, carotenoids and lipids. There is also a Cl(-1) ion associated with D1 and D2, which is required for oxygen evolution. The PSII complex binds additional chlorophylls, carotenoids and specific lipids. serves as cofactor.

It is found in the cellular thylakoid membrane. The enzyme catalyses 2 a plastoquinone + 4 hnu + 2 H2O = 2 a plastoquinol + O2. Photosystem II (PSII) is a light-driven water:plastoquinone oxidoreductase that uses light energy to abstract electrons from H(2)O, generating O(2) and a proton gradient subsequently used for ATP formation. It consists of a core antenna complex that captures photons, and an electron transfer chain that converts photonic excitation into a charge separation. The D1/D2 (PsbA/PsbD) reaction center heterodimer binds P680, the primary electron donor of PSII as well as several subsequent electron acceptors. D2 is needed for assembly of a stable PSII complex. This is Photosystem II D2 protein from Prochlorococcus marinus (strain MIT 9313).